Consider the following 28-residue polypeptide: uORF1 protein (28 aa).

It localises to the host cytoplasm. The protein localises to the host cytoskeleton. Plays a role in the reorganization of host microtubules and intermediate filaments to form a cytoskeletal cage that surrounds the viral factories, protecting the site of viral replication. May play a role in viral infection of human cortical neurons. This Zika virus (isolate ZIKV/Human/French Polynesia/10087PF/2013) (ZIKV) protein is uORF1 protein.